Consider the following 301-residue polypeptide: MANHVITATATMLEEMRNHYASDITGHLPAGALFVAKRSGCTITAYRTGKVLFQGKEAEQEAAKWMKESDQKEAPVPQPPLAAASAIGSDEVGTGDYFGPVVVAAAYVAKDQMDAITAMGIKDSKLLTDEAIRRLAPSLMNMIPNQTVILSNPMYNDWQRSGMPQTKIKALLHNEAIGKLVKQLSPIEPEAIIIDQFIERDLYFRYLENETNVVRDHVYCYPKAETVHVAVAAASIIARYVFLQEMERLSKEVGMTLPKGAGAQVDQAAAKLIQTHGPAILEMCAKLHFANTEKAARIAKK.

The RNase H type-2 domain occupies 84 to 301; it reads ASAIGSDEVG…TEKAARIAKK (218 aa). A divalent metal cation contacts are provided by Asp-90, Glu-91, and Asp-195.

It belongs to the RNase HII family. RnhC subfamily. It depends on Mn(2+) as a cofactor. Mg(2+) serves as cofactor.

The protein localises to the cytoplasm. It carries out the reaction Endonucleolytic cleavage to 5'-phosphomonoester.. Endonuclease that specifically degrades the RNA of RNA-DNA hybrids. This chain is Ribonuclease HIII, found in Geobacillus sp. (strain WCH70).